Reading from the N-terminus, the 270-residue chain is Insulin-like growth factor-binding protein-like 1 (270 aa).

A signal peptide spans 1–17; sequence MPRLPLLLLLLPSLARG. Residues 26–101 form the IGFBP N-terminal domain; the sequence is RHPECSPCQQ…PEGTGLCVCA (76 aa). Cystine bridges form between Cys30–Cys55, Cys33–Cys57, Cys38–Cys58, Cys44–Cys61, Cys69–Cys83, Cys77–Cys98, and Cys107–Cys143. One can recognise a Kazal-like domain in the interval 87–145; that stretch reads ASGTAPEGTGLCVCAQRGAVCGSDGRSYSSICALRLRARHAPRAHHGHLHKARDGPCEF. An Ig-like C2-type domain is found at 147–251; that stretch reads PVVLMPPRDI…GEAQSHGTVT (105 aa). Asn158 is a glycosylation site (N-linked (GlcNAc...) asparagine). The cysteines at positions 168 and 235 are disulfide-linked.

The protein resides in the secreted. Functionally, IGF-binding proteins prolong the half-life of IGFs and have been shown to either inhibit or stimulate the growth promoting effects of the IGFs in cell culture. They alter the interaction of IGFs with their cell surface receptors. The sequence is that of Insulin-like growth factor-binding protein-like 1 (Igfbpl1) from Mus musculus (Mouse).